The following is a 545-amino-acid chain: Indole-3-pyruvate decarboxylase (545 aa).

Glu-48 is a thiamine diphosphate binding site. The interval 382 to 460 is thiamine pyrophosphate binding; the sequence is DCLFTAMDMI…VILFNNASWE (79 aa). Mg(2+) is bound by residues Asp-429 and Asn-456.

The protein belongs to the TPP enzyme family. A metal cation serves as cofactor. The cofactor is thiamine diphosphate.

The enzyme catalyses indole-3-pyruvate + H(+) = indole-3-acetaldehyde + CO2. Its pathway is plant hormone metabolism; auxin biosynthesis. This chain is Indole-3-pyruvate decarboxylase (ipdC), found in Azospirillum brasilense.